The sequence spans 352 residues: Uroporphyrinogen decarboxylase (352 aa).

Substrate is bound by residues Arg29–Arg33, Phe48, Asp78, Tyr154, Ser209, and His322.

This sequence belongs to the uroporphyrinogen decarboxylase family. Homodimer.

It is found in the cytoplasm. The enzyme catalyses uroporphyrinogen III + 4 H(+) = coproporphyrinogen III + 4 CO2. It functions in the pathway porphyrin-containing compound metabolism; protoporphyrin-IX biosynthesis; coproporphyrinogen-III from 5-aminolevulinate: step 4/4. Its function is as follows. Catalyzes the decarboxylation of four acetate groups of uroporphyrinogen-III to yield coproporphyrinogen-III. This is Uroporphyrinogen decarboxylase from Bacillus pumilus (strain SAFR-032).